The chain runs to 106 residues: uncharacterized protein (106 aa).

It belongs to the csb family.

This is an uncharacterized protein from Dictyostelium discoideum (Social amoeba).